The sequence spans 218 residues: Octanoyltransferase (218 aa).

Positions 32–214 (VLTADEIWLV…HFTQLLGYND (183 aa)) constitute a BPL/LPL catalytic domain. Residues 71–78 (RGGQITYH), 143–145 (SLG), and 156–158 (GLA) each bind substrate. Cys-174 serves as the catalytic Acyl-thioester intermediate.

This sequence belongs to the LipB family.

It localises to the cytoplasm. The enzyme catalyses octanoyl-[ACP] + L-lysyl-[protein] = N(6)-octanoyl-L-lysyl-[protein] + holo-[ACP] + H(+). It participates in protein modification; protein lipoylation via endogenous pathway; protein N(6)-(lipoyl)lysine from octanoyl-[acyl-carrier-protein]: step 1/2. Its function is as follows. Catalyzes the transfer of endogenously produced octanoic acid from octanoyl-acyl-carrier-protein onto the lipoyl domains of lipoate-dependent enzymes. Lipoyl-ACP can also act as a substrate although octanoyl-ACP is likely to be the physiological substrate. The sequence is that of Octanoyltransferase from Histophilus somni (strain 2336) (Haemophilus somnus).